Reading from the N-terminus, the 186-residue chain is MINLVEKEWQEHQKIVQASEILKGQIAKVGELLCECLKKGGKILICGNGGSAADAQHFAAELSGRYKKERKALAGIALTTDTSALSAIGNDYGFEFVFSRQVEALGNEKDVLIGISTSGKSPNVLEALKKAKELNMLCLGLSGKGGGMMNKLCDHNLVVPSDDTARIQEMHILIIHTLCQIIDESF.

The SIS domain occupies 33–186 (LCECLKKGGK…TLCQIIDESF (154 aa)). 48 to 50 (NGG) serves as a coordination point for substrate. Positions 57 and 61 each coordinate Zn(2+). Residues Glu-61, 90–91 (ND), 116–118 (STS), Ser-121, and Gln-168 contribute to the substrate site. Gln-168 and His-176 together coordinate Zn(2+).

It belongs to the SIS family. GmhA subfamily. In terms of assembly, homotetramer. Requires Zn(2+) as cofactor.

It localises to the cytoplasm. It carries out the reaction 2 D-sedoheptulose 7-phosphate = D-glycero-alpha-D-manno-heptose 7-phosphate + D-glycero-beta-D-manno-heptose 7-phosphate. Its pathway is carbohydrate biosynthesis; D-glycero-D-manno-heptose 7-phosphate biosynthesis; D-glycero-alpha-D-manno-heptose 7-phosphate and D-glycero-beta-D-manno-heptose 7-phosphate from sedoheptulose 7-phosphate: step 1/1. The protein operates within bacterial outer membrane biogenesis; LOS core biosynthesis. Functionally, catalyzes the isomerization of sedoheptulose 7-phosphate in D-glycero-D-manno-heptose 7-phosphate. In Campylobacter jejuni subsp. jejuni serotype O:2 (strain ATCC 700819 / NCTC 11168), this protein is Phosphoheptose isomerase 1 (gmhA1).